The following is a 227-amino-acid chain: Putative methylase YubD (227 aa).

It belongs to the N(4)/N(6)-methyltransferase family.

Its function is as follows. A putative beta subtype methylase whose recognition site is unknown. The protein is Putative methylase YubD (yubD) of Escherichia coli (strain K12).